Reading from the N-terminus, the 1003-residue chain is Rho-associated protein kinase 1 (1003 aa).

Residues 1–28 (VAPVVPDLSSDIDTSNFDDLEEDKGEEE) form a disordered region. Residues 1 to 58 (VAPVVPDLSSDIDTSNFDDLEEDKGEEETFPIPKAFVGNQLPFVGFTYYSNRRYLSSA) form the AGC-kinase C-terminal domain. Residues 16–28 (NFDDLEEDKGEEE) are compositionally biased toward acidic residues. Positions 17–376 (FDDLEEDKGE…KKLKEEREAR (360 aa)) are interaction with FHOD1. Positions 71 to 341 (KSLQESLQKT…RLEQEVNEHK (271 aa)) form a coiled coil. In terms of domain architecture, REM-1 spans 128–205 (STVSQIEKEK…LEEANDLLRT (78 aa)). An N6-acetyllysine modification is found at Lys296. The segment at 356 to 595 (EAKSVAMCEM…TVSRLEEANS (240 aa)) is SHROOM3 binding. Residues 598-664 (TKDIEILRRE…LAEIMNRKDF (67 aa)) form the RhoBD domain. Residues 647 to 659 (LKTQAVNKLAEIM) are RHOA binding. The stretch at 660 to 751 (NRKDFKIDRK…KLLDLSDSTS (92 aa)) forms a coiled coil. Residues Ser754 and Ser757 each carry the phosphoserine modification. The auto-inhibitory stretch occupies residues 764-1003 (NLPESRIEGW…VVKNTSGKTR (240 aa)). In terms of domain architecture, PH spans 767–966 (ESRIEGWLSV…WVTHLVKKIP (200 aa)). Residues 877-930 (GHEFIPTLYHFPANCDACAKPLWHVFKPPPALECRRCHVKCHRDHLDKKEDLIC) form a Phorbol-ester/DAG-type zinc finger. The interval 968 to 1003 (NPPSGFVRASPRTLSTRSTANQSFRKVVKNTSGKTR) is disordered. The residue at position 977 (Ser977) is a Phosphoserine. Over residues 979–1003 (RTLSTRSTANQSFRKVVKNTSGKTR) the composition is skewed to polar residues.

It belongs to the protein kinase superfamily. AGC Ser/Thr protein kinase family. Homodimer. Interacts with RHOA (activated by GTP), RHOB, RHOC, GEM, MYLC2B, RHOE, PPP1R12A, LIMK1, LIMK2, TSG101, CHORDC1, DAPK3, PFN1, PTEN and JIP3. Interacts with ITGB1BP1 (via N-terminus and PTB domain). Interacts with FHOD1 in a Src-dependent manner. Interacts with SHROOM3. The cofactor is Mg(2+). In terms of processing, autophosphorylated on serine and threonine residues. Post-translationally, cleaved by caspase-3 during apoptosis. This leads to constitutive activation of the kinase and membrane blebbing.

The protein localises to the cytoplasm. Its subcellular location is the cytoskeleton. It localises to the microtubule organizing center. It is found in the centrosome. The protein resides in the centriole. The protein localises to the golgi apparatus membrane. Its subcellular location is the cell projection. It localises to the bleb. It is found in the cell membrane. The protein resides in the lamellipodium. The protein localises to the ruffle. It catalyses the reaction L-seryl-[protein] + ATP = O-phospho-L-seryl-[protein] + ADP + H(+). The catalysed reaction is L-threonyl-[protein] + ATP = O-phospho-L-threonyl-[protein] + ADP + H(+). Activated by RHOA binding. Inhibited by Y-27632. Protein kinase which is a key regulator of actin cytoskeleton and cell polarity. Involved in regulation of smooth muscle contraction, actin cytoskeleton organization, stress fiber and focal adhesion formation, neurite retraction, cell adhesion and motility via phosphorylation of DAPK3, GFAP, LIMK1, LIMK2, MYL9/MLC2, TPPP, PFN1 and PPP1R12A. Phosphorylates FHOD1 and acts synergistically with it to promote SRC-dependent non-apoptotic plasma membrane blebbing. Phosphorylates JIP3 and regulates the recruitment of JNK to JIP3 upon UVB-induced stress. Acts as a suppressor of inflammatory cell migration by regulating PTEN phosphorylation and stability. Acts as a negative regulator of VEGF-induced angiogenic endothelial cell activation. Required for centrosome positioning and centrosome-dependent exit from mitosis. Plays a role in terminal erythroid differentiation. May regulate closure of the eyelids and ventral body wall by inducing the assembly of actomyosin bundles. Promotes keratinocyte terminal differentiation. Involved in osteoblast compaction through the fibronectin fibrillogenesis cell-mediated matrix assembly process, essential for osteoblast mineralization. This is Rho-associated protein kinase 1 (ROCK1) from Pan troglodytes (Chimpanzee).